The chain runs to 819 residues: Hypoxia-inducible factor 1-alpha (819 aa).

Residues 1-31 (MEGAAGGEEKKNRMSSERRKEKSRDAARSRR) are disordered. The segment at 1 to 402 (MEGAAGGEEK…KEPDALTLLA (402 aa)) is interaction with TSGA10. Basic and acidic residues predominate over residues 7–31 (GEEKKNRMSSERRKEKSRDAARSRR). One can recognise a bHLH domain in the interval 18 to 71 (RRKEKSRDAARSRRSKESEVFYELAHQLPLPHNVSSHLDKASVMRLTISYLRVR). Residues 22-31 (KSRDAARSRR) form a DNA-binding region. The region spanning 86-159 (KAQMNCFYLK…THRNGPIKKG (74 aa)) is the PAS 1 domain. Residues 171 to 192 (RMKCTLTSRGRTMNIKSATWKV) are required for heterodimer formation with ARNT. The region spanning 229 to 299 (PHPSNIEIPL…KTHHDMFTKG (71 aa)) is the PAS 2 domain. The residue at position 248 (S248) is a Phosphoserine; by CK1. Residues 303-346 (TGQYRMLAKRGGYVWVETQATVIYNTKNSQPQCIVCVNYVVSGI) form the PAC domain. Residues 402–599 (APAAGDTIIS…NPPSVSTAFQ (198 aa)) form an ODD region. Residue P403 is modified to 4-hydroxyproline. A compositionally biased stretch (polar residues) spans 495–518 (IQDQPASPSDGSTRQSSPEPNSPS). The segment at 495-521 (IQDQPASPSDGSTRQSSPEPNSPSEYC) is disordered. The segment at 532 to 576 (FKLELVEKLFAEDTEAKNPFSTQDTDLDLEMLAPYIPMDDDFQLR) is NTAD. K533 bears the N6-acetyllysine; alternate mark. Residue K533 forms a Glycyl lysine isopeptide (Lys-Gly) (interchain with G-Cter in ubiquitin); alternate linkage. Glycyl lysine isopeptide (Lys-Gly) (interchain with G-Cter in ubiquitin) cross-links involve residues K539 and K548. S552 carries the post-translational modification Phosphoserine; by GSK3-beta. At T556 the chain carries Phosphothreonine; by GSK3-beta. P565 carries the 4-hydroxyproline modification. S577 is modified (phosphoserine; by PLK3). The segment at 577-778 (SFDQLSPLES…SDLACRLLGQ (202 aa)) is ID. Residues 581-685 (LSPLESSSPN…SHPRSPNVLS (105 aa)) form a disordered region. The segment covering 582–613 (SPLESSSPNPPSVSTAFQQTQLQEPTITTTTT) has biased composition (low complexity). The segment covering 614–628 (EELKTVTKDSTEDIK) has biased composition (basic and acidic residues). A compositionally biased stretch (low complexity) spans 632–655 (TSPSSTHTPKETTTATTSSPYSGT). Phosphoserine; by PLK3 is present on S650. K702 carries the post-translational modification N6-acetyllysine. The Nuclear localization signal signature appears at 711–717 (RKRKMEH). The interval 779-819 (SMDGSGLPQLTSYDCEVNAPIQGSRNLLQGEELLRALDQVN) is CTAD. C793 bears the S-nitrosocysteine mark. A (3S)-3-hydroxyasparagine modification is found at N796.

In terms of assembly, interacts with the ARNT; forms a heterodimer that binds core DNA sequence 5'-TACGTG-3' within the hypoxia response element (HRE) of target gene promoters. Interacts with COPS5; the interaction increases the transcriptional activity of HIF1A through increased stability. Interacts with EP300 (via TAZ-type 1 domains); the interaction is stimulated in response to hypoxia and inhibited by CITED2. Interacts with CREBBP (via TAZ-type 1 domains). Interacts with NCOA1, NCOA2, APEX1 and HSP90. Interacts (hydroxylated within the ODD domain) with VHLL (via beta domain); the interaction, leads to polyubiquitination and subsequent HIF1A proteasomal degradation. During hypoxia, sumoylated HIF1A also binds VHL; the interaction promotes the ubiquitination of HIF1A. Interacts with SENP1; the interaction desumoylates HIF1A resulting in stabilization and activation of transcription. Interacts (via the ODD domain) with NAA10; the interaction appears not to acetylate HIF1A nor have any affect on protein stability, during hypoxia. Interacts with RWDD3; the interaction enhances HIF1A sumoylation. Interacts with TSGA10. Interacts with HIF3A. Interacts with RORA (via the DNA binding domain); the interaction enhances HIF1A transcription under hypoxia through increasing protein stability. Interaction with PSMA7 inhibits the transactivation activity of HIF1A under both normoxic and hypoxia-mimicking conditions. Interacts with USP20. Interacts with RACK1; promotes HIF1A ubiquitination and proteasome-mediated degradation. Interacts (via N-terminus) with USP19. Interacts with SIRT2. Interacts (deacetylated form) with EGLN1. Interacts with CBFA2T3. Interacts with HSP90AA1 and HSP90AB1. Interacts with DCUN1D1; this interaction increases the interaction between VHL and DCUN1D1. Interacts with HIF1AN. S-nitrosylation of Cys-793 may be responsible for increased recruitment of p300 coactivator necessary for transcriptional activity of HIF-1 complex. In terms of processing, acetylation of Lys-533 by ARD1 increases interaction with VHL and stimulates subsequent proteasomal degradation. Deacetylation of Lys-702 by SIRT2 increases its interaction with and hydroxylation by EGLN1 thereby inactivating HIF1A activity by inducing its proteasomal degradation. Post-translationally, requires phosphorylation for DNA-binding. Phosphorylation at Ser-248 by CSNK1D/CK1 represses kinase activity and impairs ARNT binding. Phosphorylation by GSK3-beta and PLK3 promote degradation by the proteasome. The iron and 2-oxoglutarate dependent 3-hydroxylation of asparagine is (S) stereospecific within HIF CTAD domains. In terms of processing, sumoylated; with SUMO1 under hypoxia. Sumoylation is enhanced through interaction with RWDD3. Both sumoylation and desumoylation seem to be involved in the regulation of its stability during hypoxia. Sumoylation can promote either its stabilization or its VHL-dependent degradation by promoting hydroxyproline-independent HIF1A-VHL complex binding, thus leading to HIF1A ubiquitination and proteasomal degradation. Desumoylation by SENP1 increases its stability amd transcriptional activity. There is a disaccord between various publications on the effect of sumoylation and desumoylation on its stability and transcriptional activity. Post-translationally, in normoxia, is hydroxylated on Pro-403 and Pro-565 in the oxygen-dependent degradation domain (ODD) by EGLN1/PHD2 and EGLN2/PHD1. EGLN3/PHD3 has also been shown to hydroxylate Pro-565. The hydroxylated prolines promote interaction with VHL, initiating rapid ubiquitination and subsequent proteasomal degradation. Deubiquitinated by USP20. Under hypoxia, proline hydroxylation is impaired and ubiquitination is attenuated, resulting in stabilization. In normoxia, is hydroxylated on Asn-796 by HIF1AN, thus abrogating interaction with CREBBP and EP300 and preventing transcriptional activation. Repressed by iron ion, via Fe(2+) prolyl hydroxylase (PHD) enzymes-mediated hydroxylation and subsequent proteasomal degradation.

Its subcellular location is the cytoplasm. The protein resides in the nucleus. It localises to the nucleus speckle. Its activity is regulated as follows. Induced by reactive oxygen species (ROS). In terms of biological role, functions as a master transcriptional regulator of the adaptive response to hypoxia. Under hypoxic conditions, activates the transcription of over 40 genes, including erythropoietin, glucose transporters, glycolytic enzymes, vascular endothelial growth factor, HILPDA, and other genes whose protein products increase oxygen delivery or facilitate metabolic adaptation to hypoxia. Plays an essential role in embryonic vascularization, tumor angiogenesis and pathophysiology of ischemic disease. Heterodimerizes with ARNT; heterodimer binds to core DNA sequence 5'-TACGTG-3' within the hypoxia response element (HRE) of target gene promoters. Activation requires recruitment of transcriptional coactivators such as CREBBP and EP300. Activity is enhanced by interaction with NCOA1 and/or NCOA2. Interaction with redox regulatory protein APEX1 seems to activate CTAD and potentiates activation by NCOA1 and CREBBP. Involved in the axonal distribution and transport of mitochondria in neurons during hypoxia. In Eospalax fontanierii baileyi (Plateau zokor), this protein is Hypoxia-inducible factor 1-alpha (HIF1A).